A 311-amino-acid polypeptide reads, in one-letter code: HPr kinase/phosphorylase (311 aa).

Residues H138 and K159 contribute to the active site. 153 to 160 (GKSGVGKS) provides a ligand contact to ATP. S160 is a Mg(2+) binding site. The Proton acceptor; for phosphorylation activity. Proton donor; for dephosphorylation activity role is filled by D177. The important for the catalytic mechanism of both phosphorylation and dephosphorylation stretch occupies residues 201 to 210 (LEIRGLGIIN). Residue E202 coordinates Mg(2+). The active site involves R243. The important for the catalytic mechanism of dephosphorylation stretch occupies residues 264–269 (PVRPGR).

It belongs to the HPrK/P family. As to quaternary structure, homohexamer. The cofactor is Mg(2+).

It carries out the reaction [HPr protein]-L-serine + ATP = [HPr protein]-O-phospho-L-serine + ADP + H(+). It catalyses the reaction [HPr protein]-O-phospho-L-serine + phosphate + H(+) = [HPr protein]-L-serine + diphosphate. Its function is as follows. Catalyzes the ATP- as well as the pyrophosphate-dependent phosphorylation of a specific serine residue in HPr, a phosphocarrier protein of the phosphoenolpyruvate-dependent sugar phosphotransferase system (PTS). HprK/P also catalyzes the pyrophosphate-producing, inorganic phosphate-dependent dephosphorylation (phosphorolysis) of seryl-phosphorylated HPr (P-Ser-HPr). The two antagonistic activities of HprK/P are regulated by several intracellular metabolites, which change their concentration in response to the absence or presence of rapidly metabolisable carbon sources (glucose, fructose, etc.) in the growth medium. Also phosphorylates/dephosphorylates the HPr-like catabolite repression protein crh on a specific serine residue. Therefore, by controlling the phosphorylation state of HPr and crh, HPrK/P is a sensor enzyme that plays a major role in the regulation of carbon metabolism and sugar transport: it mediates carbon catabolite repression (CCR), and regulates PTS-catalyzed carbohydrate uptake and inducer exclusion. The chain is HPr kinase/phosphorylase from Geobacillus sp. (strain WCH70).